Here is a 548-residue protein sequence, read N- to C-terminus: Rhodopsin kinase grk7-b (548 aa).

A Phosphoserine; by PKA modification is found at Ser33. In terms of domain architecture, RGS spans 53–172 (FEDICEQQPI…QTSLFFDRFV (120 aa)). Residues 187–446 (FYEFRTLGKG…NDDPRKHEFF (260 aa)) enclose the Protein kinase domain. ATP is bound by residues 193–201 (LGKGGFGEV) and Lys216. The Proton acceptor role is filled by Asp312. The region spanning 447 to 512 (KSINFPRLEA…GVVPIAWQQE (66 aa)) is the AGC-kinase C-terminal domain. Positions 520-548 (DELSDPNRKESAAGLEDEEQQKSKSCTLL) are disordered. Cys545 carries the cysteine methyl ester modification. The S-geranylgeranyl cysteine moiety is linked to residue Cys545. Residues 546–548 (TLL) constitute a propeptide, removed in mature form.

It belongs to the protein kinase superfamily. AGC Ser/Thr protein kinase family. GPRK subfamily. In terms of processing, phosphorylation at Ser-33 is regulated by light and activated by cAMP. In terms of tissue distribution, expressed in the eyes (at protein level). Expressed in the eyes, the pineal gland and in the brain.

The protein localises to the membrane. The enzyme catalyses L-threonyl-[rhodopsin] + ATP = O-phospho-L-threonyl-[rhodopsin] + ADP + H(+). The catalysed reaction is L-seryl-[rhodopsin] + ATP = O-phospho-L-seryl-[rhodopsin] + ADP + H(+). Retina-specific kinase involved in the shutoff of the photoresponse and adaptation to changing light conditions via cone opsin phosphorylation, including rhodopsin (RHO). The polypeptide is Rhodopsin kinase grk7-b (grk7b) (Danio rerio (Zebrafish)).